The sequence spans 155 residues: Small ribosomal subunit protein uS7cz/uS7cy (155 aa).

It belongs to the universal ribosomal protein uS7 family. As to quaternary structure, part of the 30S ribosomal subunit.

It is found in the plastid. The protein resides in the chloroplast. Its function is as follows. One of the primary rRNA binding proteins, it binds directly to 16S rRNA where it nucleates assembly of the head domain of the 30S subunit. The protein is Small ribosomal subunit protein uS7cz/uS7cy (rps7-A) of Cucumis sativus (Cucumber).